The sequence spans 266 residues: Hydroxyethylthiazole kinase (266 aa).

Residue M43 participates in substrate binding. ATP contacts are provided by R119 and T166. Position 193 (G193) interacts with substrate.

The protein belongs to the Thz kinase family. Requires Mg(2+) as cofactor.

The catalysed reaction is 5-(2-hydroxyethyl)-4-methylthiazole + ATP = 4-methyl-5-(2-phosphooxyethyl)-thiazole + ADP + H(+). It participates in cofactor biosynthesis; thiamine diphosphate biosynthesis; 4-methyl-5-(2-phosphoethyl)-thiazole from 5-(2-hydroxyethyl)-4-methylthiazole: step 1/1. Its function is as follows. Catalyzes the phosphorylation of the hydroxyl group of 4-methyl-5-beta-hydroxyethylthiazole (THZ). This is Hydroxyethylthiazole kinase from Methanococcus maripaludis (strain C6 / ATCC BAA-1332).